A 467-amino-acid polypeptide reads, in one-letter code: ATP synthase subunit beta (467 aa).

150 to 157 serves as a coordination point for ATP; it reads GGAGVGKT.

It belongs to the ATPase alpha/beta chains family. In terms of assembly, F-type ATPases have 2 components, CF(1) - the catalytic core - and CF(0) - the membrane proton channel. CF(1) has five subunits: alpha(3), beta(3), gamma(1), delta(1), epsilon(1). CF(0) has three main subunits: a(1), b(2) and c(9-12). The alpha and beta chains form an alternating ring which encloses part of the gamma chain. CF(1) is attached to CF(0) by a central stalk formed by the gamma and epsilon chains, while a peripheral stalk is formed by the delta and b chains.

The protein resides in the cell inner membrane. The enzyme catalyses ATP + H2O + 4 H(+)(in) = ADP + phosphate + 5 H(+)(out). Functionally, produces ATP from ADP in the presence of a proton gradient across the membrane. The catalytic sites are hosted primarily by the beta subunits. This chain is ATP synthase subunit beta, found in Vibrio cholerae serotype O1 (strain ATCC 39541 / Classical Ogawa 395 / O395).